A 155-amino-acid polypeptide reads, in one-letter code: Ribosome maturation factor RimP (155 aa).

The protein belongs to the RimP family.

It localises to the cytoplasm. In terms of biological role, required for maturation of 30S ribosomal subunits. The chain is Ribosome maturation factor RimP from Bacteroides thetaiotaomicron (strain ATCC 29148 / DSM 2079 / JCM 5827 / CCUG 10774 / NCTC 10582 / VPI-5482 / E50).